The following is a 584-amino-acid chain: Tricyclene synthase 1e20, chloroplastic (584 aa).

The transit peptide at 1-45 (MIYIWICFYLQTTLLPCSLSTRTKFAICHNTSKLHRAAYKTSRWN) directs the protein to the chloroplast. 3 N-linked (GlcNAc...) asparagine glycosylation sites follow: Asn30, Asn209, and Asn322. Residues Asp341 and Asp345 each contribute to the Mg(2+) site. The short motif at 341 to 345 (DDIFD) is the DDXXD motif element. N-linked (GlcNAc...) asparagine glycosylation is found at Asn387 and Asn468. Mg(2+)-binding residues include Asn485, Ser489, and Glu493. An N-linked (GlcNAc...) asparagine glycan is attached at Asn512.

Belongs to the terpene synthase family. Tpsg subfamily. Requires Mg(2+) as cofactor. Mn(2+) serves as cofactor. Accumulates at low levels in flowers; mostly expressed in both upper and lower petal lobes, and, to a lower extent, in tube and stamens.

It localises to the plastid. Its subcellular location is the chloroplast stroma. It carries out the reaction (2E)-geranyl diphosphate = tricyclene + diphosphate. The enzyme catalyses (2E)-geranyl diphosphate = beta-myrcene + diphosphate. It functions in the pathway secondary metabolite biosynthesis; terpenoid biosynthesis. In terms of biological role, may contribute to floral scent emission. The polypeptide is Tricyclene synthase 1e20, chloroplastic (1e20) (Antirrhinum majus (Garden snapdragon)).